A 250-amino-acid chain; its full sequence is Lectin 1 (250 aa).

N-linked (GlcNAc...) asparagine; partial glycosylation occurs at Asn119. Mn(2+) is bound by residues Glu128 and Asp130. Asp130, Tyr132, Asn138, and Asp141 together coordinate Ca(2+). The Mn(2+) site is built by Asp141 and His146.

It belongs to the leguminous lectin family.

Di-N-acetylchitobiose specific lectin. The protein is Lectin 1 of Laburnum alpinum (Scotch laburnum).